The sequence spans 188 residues: Translation initiation factor IF-3 (188 aa).

It belongs to the IF-3 family. Monomer.

The protein resides in the cytoplasm. IF-3 binds to the 30S ribosomal subunit and shifts the equilibrium between 70S ribosomes and their 50S and 30S subunits in favor of the free subunits, thus enhancing the availability of 30S subunits on which protein synthesis initiation begins. This chain is Translation initiation factor IF-3, found in Fusobacterium nucleatum subsp. nucleatum (strain ATCC 25586 / DSM 15643 / BCRC 10681 / CIP 101130 / JCM 8532 / KCTC 2640 / LMG 13131 / VPI 4355).